Reading from the N-terminus, the 106-residue chain is MIFFAAAAIGNIYFQQIYSLPIRVIGMAIALVIAFILAAITNQGTKARAFFNDSRTEARKVVWPTRAEARQTTLIVIGVTMIASLFFWAVDSIIVTVINFLTDLRF.

Helical transmembrane passes span 20–40 (LPIR…LAAI) and 75–95 (IVIG…SIIV).

Belongs to the SecE/SEC61-gamma family. In terms of assembly, component of the Sec protein translocase complex. Heterotrimer consisting of SecY, SecE and SecG subunits. The heterotrimers can form oligomers, although 1 heterotrimer is thought to be able to translocate proteins. Interacts with the ribosome. Interacts with SecDF, and other proteins may be involved. Interacts with SecA.

It is found in the cell inner membrane. Its function is as follows. Essential subunit of the Sec protein translocation channel SecYEG. Clamps together the 2 halves of SecY. May contact the channel plug during translocation. The sequence is that of Protein translocase subunit SecE from Haemophilus influenzae (strain ATCC 51907 / DSM 11121 / KW20 / Rd).